A 349-amino-acid chain; its full sequence is N-acetyltaurine hydrolase (349 aa).

Residues histidine 26, histidine 28, glutamate 169, histidine 201, histidine 230, and aspartate 298 each coordinate a divalent metal cation.

Belongs to the metallo-dependent hydrolases superfamily. Phosphotriesterase family. The cofactor is a divalent metal cation.

It is found in the cytoplasm. The protein resides in the cytosol. It carries out the reaction N-acetyltaurine + H2O = taurine + acetate. The catalysed reaction is N-propanoyltaurine + H2O = propanoate + taurine. It catalyses the reaction N-acetyl-L-methionine + H2O = L-methionine + acetate. The enzyme catalyses N-acetyl-L-isoleucine + H2O = L-isoleucine + acetate. It carries out the reaction N-acetyl-L-leucine + H2O = L-leucine + acetate. The catalysed reaction is N-acetyl-L-valine + H2O = L-valine + acetate. Its function is as follows. N-acetyltaurine hydrolase that regulates feeding by catalyzing the hydrolysis of N-acetyltaurine into taurine and acetate. N-acetyltaurine has anorexigenic and anti-obesity effects that are dependent on GFRAL receptor and GDF15. PTER also acts on other N-acetyl amino acids (Met, Ile, Leu, Val) and N-propionyltaurine, but at lower rates. This Homo sapiens (Human) protein is N-acetyltaurine hydrolase.